The sequence spans 187 residues: Sliding-clamp-loader small subunit (187 aa).

It belongs to the Tevenvirinae sliding-clamp-loader small subunit family. The sliding-clamp-loader consists of 4 large subunits and 1 small subunit. Interacts with the sliding clamp; this interaction allows the sliding-clamp-loader to open the sliding clamp. Part of the replicase complex that includes the DNA polymerase, the polymerase clamp, the clamp loader complex, the single-stranded DNA binding protein, the primase, the helicase and the helicase assembly factor.

Forms the sliding-clamp-loader together with the small subunit. The clamp loader holds the clamp in an open conformation and places it onto the DNA. This Escherichia coli (Bacteriophage T4) protein is Sliding-clamp-loader small subunit (62).